We begin with the raw amino-acid sequence, 671 residues long: Probable potassium transport system protein Kup 2 (671 aa).

The next 12 membrane-spanning stretches (helical) occupy residues 18–38 (GFLI…LYAM), 60–80 (VSLV…LIAL), 103–123 (WLIV…ALTP), 149–169 (VTTL…ASLV), 173–193 (FGPI…INSF), 218–238 (AGFF…ALYS), 252–272 (WPFV…WLLA), 292–312 (MVIY…QALI), 343–363 (LYIP…VLYF), 373–393 (YSLA…YFLI), 402–422 (IAFI…ASLV), and 424–444 (FING…VMFI).

Belongs to the HAK/KUP transporter (TC 2.A.72) family.

Its subcellular location is the cell membrane. The catalysed reaction is K(+)(in) + H(+)(in) = K(+)(out) + H(+)(out). Transport of potassium into the cell. Likely operates as a K(+):H(+) symporter. The protein is Probable potassium transport system protein Kup 2 of Lactococcus lactis subsp. cremoris (strain MG1363).